Reading from the N-terminus, the 299-residue chain is Protease HtpX homolog (299 aa).

2 consecutive transmembrane segments (helical) span residues 14–34 (WLLL…VGYL) and 39–59 (GFGG…TMIF). His143 contacts Zn(2+). Glu144 is a catalytic residue. Residue His147 coordinates Zn(2+). The next 2 helical transmembrane spans lie at 153–173 (IRIS…AVMA) and 198–218 (IILL…ATLV). Glu227 lines the Zn(2+) pocket.

This sequence belongs to the peptidase M48B family. Zn(2+) is required as a cofactor.

The protein resides in the cell membrane. In Streptococcus thermophilus (strain ATCC BAA-491 / LMD-9), this protein is Protease HtpX homolog.